The primary structure comprises 112 residues: Probable insulin-like peptide beta-type 5 (112 aa).

The first 19 residues, 1–19, serve as a signal peptide directing secretion; that stretch reads MNSVFTIIFVLCALQVAAS. A propeptide spans 20 to 58 (removed; by convertase egl-3); that stretch reads FRQSFGPSMSEESASMQLLRELQHNMMESAHRPMPRARR. 4 disulfide bridges follow: cysteine 68/cysteine 97, cysteine 80/cysteine 110, cysteine 84/cysteine 111, and cysteine 96/cysteine 101.

The protein belongs to the insulin family. In terms of processing, may be processed by serine endoprotease bli-4. Expressed by ASI and ASJ sensory neurons.

Its subcellular location is the secreted. In terms of biological role, probable insulin-like peptide which negatively regulates synapse development at the neuromuscular junctions. Probably acts as a daf-2/InsR agonist ligand to prevent dauer formation under optimal environmental conditions. Acts on AWC sensory neurons to regulate high salt chemotaxis responses. In Caenorhabditis elegans, this protein is Probable insulin-like peptide beta-type 5 (ins-6).